We begin with the raw amino-acid sequence, 29 residues long: Beta-hexatoxin-Mr1a (29 aa).

3 cysteine pairs are disulfide-bonded: Cys-2-Cys-16, Cys-9-Cys-21, and Cys-15-Cys-26.

It belongs to the neurotoxin 15 family. 01 (magi-5) subfamily. Expressed by the venom gland.

It localises to the secreted. Functionally, insect and vertebrate active toxin. Binds at site 4 of mammalian voltage-gated sodium channels and shifts the activation voltage of the mammalian rNav1.2a (SCN2A) channel to more hyperpolarized voltages, whereas the insect channel, DmNav1 (para), is not affected. Causes temporary paralysis when injected into lepidopteran larvae at 8.6 nmol/g. A low intracranial injection dose into mice causes lacrimation, closure of the eyes and sweating. A high injection dose causes extensive lacrimation and death. The protein is Beta-hexatoxin-Mr1a of Macrothele raveni (Funnel-web spider).